The sequence spans 142 residues: MAKKSIGQLKLQVPAGAATPSPPIGPALGQRGINIMEFCKAFNAATQEMEKGAPIPVIITYYQDKSFTFSLKTPPVSFFLKKEVNLKSGSKEPGKVSVGRISRDKIRSIAEAKMKDLNANDIEAAMRMVEGSARSMGLEVVG.

The protein belongs to the universal ribosomal protein uL11 family. As to quaternary structure, part of the ribosomal stalk of the 50S ribosomal subunit. Interacts with L10 and the large rRNA to form the base of the stalk. L10 forms an elongated spine to which L12 dimers bind in a sequential fashion forming a multimeric L10(L12)X complex. In terms of processing, one or more lysine residues are methylated.

Forms part of the ribosomal stalk which helps the ribosome interact with GTP-bound translation factors. This Bartonella quintana (strain Toulouse) (Rochalimaea quintana) protein is Large ribosomal subunit protein uL11.